We begin with the raw amino-acid sequence, 910 residues long: Protein translocase subunit SecA (910 aa).

Residues Q86, 104-108 (GEGKT), and D499 contribute to the ATP site. Positions 894, 896, 905, and 906 each coordinate Zn(2+).

This sequence belongs to the SecA family. As to quaternary structure, monomer and homodimer. Part of the essential Sec protein translocation apparatus which comprises SecA, SecYEG and auxiliary proteins SecDF-YajC and YidC. It depends on Zn(2+) as a cofactor.

Its subcellular location is the cell inner membrane. It localises to the cytoplasm. The enzyme catalyses ATP + H2O + cellular proteinSide 1 = ADP + phosphate + cellular proteinSide 2.. In terms of biological role, part of the Sec protein translocase complex. Interacts with the SecYEG preprotein conducting channel. Has a central role in coupling the hydrolysis of ATP to the transfer of proteins into and across the cell membrane, serving both as a receptor for the preprotein-SecB complex and as an ATP-driven molecular motor driving the stepwise translocation of polypeptide chains across the membrane. In Rickettsia bellii (strain OSU 85-389), this protein is Protein translocase subunit SecA.